Consider the following 270-residue polypeptide: Putative phosphoenolpyruvate synthase regulatory protein (270 aa).

150-157 (GVSRCGKT) provides a ligand contact to ADP.

Belongs to the pyruvate, phosphate/water dikinase regulatory protein family. PSRP subfamily.

It carries out the reaction [pyruvate, water dikinase] + ADP = [pyruvate, water dikinase]-phosphate + AMP + H(+). It catalyses the reaction [pyruvate, water dikinase]-phosphate + phosphate + H(+) = [pyruvate, water dikinase] + diphosphate. Functionally, bifunctional serine/threonine kinase and phosphorylase involved in the regulation of the phosphoenolpyruvate synthase (PEPS) by catalyzing its phosphorylation/dephosphorylation. This is Putative phosphoenolpyruvate synthase regulatory protein from Shewanella amazonensis (strain ATCC BAA-1098 / SB2B).